The following is a 231-amino-acid chain: MKIGIIGAMQQEVAILKDLIEDVQEVNQAGCTFYSGQIQGVDVVLLQSGIGKVSAALGTALLISQYAPDVVINTGSAGGFDASLNVGDVVISSEVRHHDADVTAFGYEIGQMAGQPAAFKADEKLMTVAEQALAQLPNTHAVRGLICTGDAFVCTAERQQFIRQHFPSVVAVEMEASAIAQTCHQFKVPFVVVRAISDVADKESPLSFEEFLPLAAKSSSAMVLKMVELLK.

The active-site Proton acceptor is Glu-12. Residues Gly-78, Val-153, and 174–175 contribute to the substrate site; that span reads ME. The Proton donor role is filled by Asp-198.

The protein belongs to the PNP/UDP phosphorylase family. MtnN subfamily.

It catalyses the reaction S-adenosyl-L-homocysteine + H2O = S-(5-deoxy-D-ribos-5-yl)-L-homocysteine + adenine. It carries out the reaction S-methyl-5'-thioadenosine + H2O = 5-(methylsulfanyl)-D-ribose + adenine. The catalysed reaction is 5'-deoxyadenosine + H2O = 5-deoxy-D-ribose + adenine. It functions in the pathway amino-acid biosynthesis; L-methionine biosynthesis via salvage pathway; S-methyl-5-thio-alpha-D-ribose 1-phosphate from S-methyl-5'-thioadenosine (hydrolase route): step 1/2. Its function is as follows. Catalyzes the irreversible cleavage of the glycosidic bond in both 5'-methylthioadenosine (MTA) and S-adenosylhomocysteine (SAH/AdoHcy) to adenine and the corresponding thioribose, 5'-methylthioribose and S-ribosylhomocysteine, respectively. Also cleaves 5'-deoxyadenosine, a toxic by-product of radical S-adenosylmethionine (SAM) enzymes, into 5-deoxyribose and adenine. This chain is 5'-methylthioadenosine/S-adenosylhomocysteine nucleosidase, found in Vibrio cholerae serotype O1 (strain ATCC 39315 / El Tor Inaba N16961).